We begin with the raw amino-acid sequence, 319 residues long: 3'-5' exoribonuclease YhaM (319 aa).

The OB DNA-binding region spans 12 to 90; it reads EAVDGYLLIK…QLKIASIRPT (79 aa). An HD domain is found at 163–279; it reads HVVSMLRIGK…LHLIDNIDAK (117 aa).

It belongs to the YhaM family.

Shows a 3'-5' exoribonuclease activity. This is 3'-5' exoribonuclease YhaM from Shouchella clausii (strain KSM-K16) (Alkalihalobacillus clausii).